Here is a 353-residue protein sequence, read N- to C-terminus: Divinyl chlorophyll a/b light-harvesting protein PcbG (353 aa).

The next 6 helical transmembrane spans lie at 28–48, 64–84, 90–110, 204–224, 244–264, and 308–328; these read FISS…ANTL, GLVV…NGVF, LLVV…GGML, IMGG…FHIL, FVLS…ALWC, and LTNV…FHGL.

The protein belongs to the PsbB/PsbC family. IsiA/Pcb subfamily. The antenna complex consists of divinyl chlorophylls (a and b) and divinyl chlorophyll a/b binding proteins and binds more divinyl chlorophyll b than does the antenna complex from high-light-adapted Prochlorococcus. Also forms complexes with PSI, consisting of a PSI trimer with surrounded by a PcbG ring (probably with 18 subunits). Is the only subunit found in this ring under iron-replete conditions. Divinyl chlorophyll a is required as a cofactor. Divinyl chlorophyll b serves as cofactor.

It is found in the cellular thylakoid membrane. The antenna complex functions as a light receptor, it captures and delivers excitation energy to photosystems I. The Prochlorales pcb genes are not related to higher plant LHCs. The sequence is that of Divinyl chlorophyll a/b light-harvesting protein PcbG (pcbG) from Prochlorococcus marinus (strain SARG / CCMP1375 / SS120).